Reading from the N-terminus, the 139-residue chain is uncharacterized protein (139 aa).

Positions 83 to 109 (LIPPKKTSPATSSSLKPPRRPRGCLNG) are disordered. Over residues 86–98 (PKKTSPATSSSLK) the composition is skewed to low complexity.

This sequence to M.pneumoniae MPN_091 and MPN_463.

This is an uncharacterized protein from Mycoplasma pneumoniae (strain ATCC 29342 / M129 / Subtype 1) (Mycoplasmoides pneumoniae).